The following is an 89-amino-acid chain: Small ribosomal subunit protein uS15 (89 aa).

Belongs to the universal ribosomal protein uS15 family. As to quaternary structure, part of the 30S ribosomal subunit. Forms a bridge to the 50S subunit in the 70S ribosome, contacting the 23S rRNA.

One of the primary rRNA binding proteins, it binds directly to 16S rRNA where it helps nucleate assembly of the platform of the 30S subunit by binding and bridging several RNA helices of the 16S rRNA. In terms of biological role, forms an intersubunit bridge (bridge B4) with the 23S rRNA of the 50S subunit in the ribosome. The chain is Small ribosomal subunit protein uS15 from Shewanella putrefaciens (strain CN-32 / ATCC BAA-453).